The following is a 35-amino-acid chain: Photosystem II reaction center protein T (35 aa).

Residues 3 to 23 (ALVYTFLLVGTLGIIFFAIFF) form a helical membrane-spanning segment.

Belongs to the PsbT family. PSII is composed of 1 copy each of membrane proteins PsbA, PsbB, PsbC, PsbD, PsbE, PsbF, PsbH, PsbI, PsbJ, PsbK, PsbL, PsbM, PsbT, PsbY, PsbZ, Psb30/Ycf12, at least 3 peripheral proteins of the oxygen-evolving complex and a large number of cofactors. It forms dimeric complexes.

The protein localises to the plastid. It is found in the chloroplast thylakoid membrane. Functionally, found at the monomer-monomer interface of the photosystem II (PS II) dimer, plays a role in assembly and dimerization of PSII. PSII is a light-driven water plastoquinone oxidoreductase, using light energy to abstract electrons from H(2)O, generating a proton gradient subsequently used for ATP formation. The chain is Photosystem II reaction center protein T from Marchantia polymorpha (Common liverwort).